We begin with the raw amino-acid sequence, 317 residues long: Beta-ketoacyl-[acyl-carrier-protein] synthase III (317 aa).

Catalysis depends on residues C112 and H244. The segment at 245 to 249 (QANLR) is ACP-binding. N274 is a catalytic residue.

It belongs to the thiolase-like superfamily. FabH family. In terms of assembly, homodimer.

It is found in the cytoplasm. The catalysed reaction is malonyl-[ACP] + acetyl-CoA + H(+) = 3-oxobutanoyl-[ACP] + CO2 + CoA. It participates in lipid metabolism; fatty acid biosynthesis. In terms of biological role, catalyzes the condensation reaction of fatty acid synthesis by the addition to an acyl acceptor of two carbons from malonyl-ACP. Catalyzes the first condensation reaction which initiates fatty acid synthesis and may therefore play a role in governing the total rate of fatty acid production. Possesses both acetoacetyl-ACP synthase and acetyl transacylase activities. Its substrate specificity determines the biosynthesis of branched-chain and/or straight-chain of fatty acids. This chain is Beta-ketoacyl-[acyl-carrier-protein] synthase III, found in Shigella sonnei (strain Ss046).